The sequence spans 76 residues: MGSFSIWHWLIVLAVVLLLFGRGKIPELMGDVAKGIKNFKQGMSDEDAKDDARDSGRTIDAKADETVNDVKKTTKS.

A helical transmembrane segment spans residues 1-21 (MGSFSIWHWLIVLAVVLLLFG). A disordered region spans residues 43-76 (MSDEDAKDDARDSGRTIDAKADETVNDVKKTTKS). The segment covering 50 to 76 (DDARDSGRTIDAKADETVNDVKKTTKS) has biased composition (basic and acidic residues).

The protein belongs to the TatA/E family. As to quaternary structure, the Tat system comprises two distinct complexes: a TatABC complex, containing multiple copies of TatA, TatB and TatC subunits, and a separate TatA complex, containing only TatA subunits. Substrates initially bind to the TatABC complex, which probably triggers association of the separate TatA complex to form the active translocon.

It localises to the cell inner membrane. Part of the twin-arginine translocation (Tat) system that transports large folded proteins containing a characteristic twin-arginine motif in their signal peptide across membranes. TatA could form the protein-conducting channel of the Tat system. This is Sec-independent protein translocase protein TatA from Brucella anthropi (strain ATCC 49188 / DSM 6882 / CCUG 24695 / JCM 21032 / LMG 3331 / NBRC 15819 / NCTC 12168 / Alc 37) (Ochrobactrum anthropi).